We begin with the raw amino-acid sequence, 88 residues long: Cell division topological specificity factor (88 aa).

It belongs to the MinE family.

Its function is as follows. Prevents the cell division inhibition by proteins MinC and MinD at internal division sites while permitting inhibition at polar sites. This ensures cell division at the proper site by restricting the formation of a division septum at the midpoint of the long axis of the cell. This is Cell division topological specificity factor from Aeromonas salmonicida (strain A449).